A 271-amino-acid polypeptide reads, in one-letter code: Phosphatidylglycerol--prolipoprotein diacylglyceryl transferase (271 aa).

Transmembrane regions (helical) follow at residues 18–38, 51–71, 89–109, and 115–135; these read LSVH…LWMA, IFID…RAYY, IWKG…TGIV, and GISF…GQAI. R137 is a binding site for a 1,2-diacyl-sn-glycero-3-phospho-(1'-sn-glycerol). Helical transmembrane passes span 177-197, 205-225, and 236-256; these read HPTF…LLLL, GNLF…IEGM, and LRIA…LMIF.

This sequence belongs to the Lgt family.

It is found in the cell membrane. The enzyme catalyses L-cysteinyl-[prolipoprotein] + a 1,2-diacyl-sn-glycero-3-phospho-(1'-sn-glycerol) = an S-1,2-diacyl-sn-glyceryl-L-cysteinyl-[prolipoprotein] + sn-glycerol 1-phosphate + H(+). It participates in protein modification; lipoprotein biosynthesis (diacylglyceryl transfer). Its function is as follows. Catalyzes the transfer of the diacylglyceryl group from phosphatidylglycerol to the sulfhydryl group of the N-terminal cysteine of a prolipoprotein, the first step in the formation of mature lipoproteins. The polypeptide is Phosphatidylglycerol--prolipoprotein diacylglyceryl transferase (Bacillus velezensis (strain DSM 23117 / BGSC 10A6 / LMG 26770 / FZB42) (Bacillus amyloliquefaciens subsp. plantarum)).